The sequence spans 499 residues: Bifunctional purine biosynthesis protein PurH (499 aa).

The 144-residue stretch at Met1–Thr144 folds into the MGS-like domain.

It belongs to the PurH family.

The catalysed reaction is (6R)-10-formyltetrahydrofolate + 5-amino-1-(5-phospho-beta-D-ribosyl)imidazole-4-carboxamide = 5-formamido-1-(5-phospho-D-ribosyl)imidazole-4-carboxamide + (6S)-5,6,7,8-tetrahydrofolate. The enzyme catalyses IMP + H2O = 5-formamido-1-(5-phospho-D-ribosyl)imidazole-4-carboxamide. Its pathway is purine metabolism; IMP biosynthesis via de novo pathway; 5-formamido-1-(5-phospho-D-ribosyl)imidazole-4-carboxamide from 5-amino-1-(5-phospho-D-ribosyl)imidazole-4-carboxamide (10-formyl THF route): step 1/1. It participates in purine metabolism; IMP biosynthesis via de novo pathway; IMP from 5-formamido-1-(5-phospho-D-ribosyl)imidazole-4-carboxamide: step 1/1. The polypeptide is Bifunctional purine biosynthesis protein PurH (Clostridium acetobutylicum (strain ATCC 824 / DSM 792 / JCM 1419 / IAM 19013 / LMG 5710 / NBRC 13948 / NRRL B-527 / VKM B-1787 / 2291 / W)).